The chain runs to 525 residues: GMP synthase [glutamine-hydrolyzing] (525 aa).

One can recognise a Glutamine amidotransferase type-1 domain in the interval 9–207 (RILILDFGSQ…ILDICGCEAL (199 aa)). Cys86 acts as the Nucleophile in catalysis. Active-site residues include His181 and Glu183. A GMPS ATP-PPase domain is found at 208–400 (WTPSKIAEDA…LGLPYDMVYR (193 aa)). Position 235–241 (235–241 (SGGVDSS)) interacts with ATP.

Homodimer.

The enzyme catalyses XMP + L-glutamine + ATP + H2O = GMP + L-glutamate + AMP + diphosphate + 2 H(+). Its pathway is purine metabolism; GMP biosynthesis; GMP from XMP (L-Gln route): step 1/1. In terms of biological role, catalyzes the synthesis of GMP from XMP. This chain is GMP synthase [glutamine-hydrolyzing], found in Pseudomonas syringae pv. syringae (strain B728a).